The following is a 144-amino-acid chain: uncharacterized protein (144 aa).

Residues 1 to 22 form the signal peptide; that stretch reads MCTDVAFFSLDCLATWLGGVCS.

This is an uncharacterized protein from Saccharomyces cerevisiae (strain ATCC 204508 / S288c) (Baker's yeast).